The chain runs to 231 residues: Ribonuclease 3 (231 aa).

Residues 5–134 (QKKLKNDYGL…FLGALFIDQG (130 aa)) form the RNase III domain. E47 lines the Mg(2+) pocket. D51 is an active-site residue. 2 residues coordinate Mg(2+): N120 and E123. Residue E123 is part of the active site. Residues 160–229 (DYKTELQEVL…AENAIKGQNH (70 aa)) form the DRBM domain.

It belongs to the ribonuclease III family. In terms of assembly, homodimer. The cofactor is Mg(2+).

Its subcellular location is the cytoplasm. It carries out the reaction Endonucleolytic cleavage to 5'-phosphomonoester.. Digests double-stranded RNA. Involved in the processing of primary rRNA transcript to yield the immediate precursors to the large and small rRNAs (23S and 16S). Processes some mRNAs, and tRNAs when they are encoded in the rRNA operon. Processes pre-crRNA and tracrRNA of type II CRISPR loci if present in the organism. This Lactococcus lactis subsp. lactis (strain IL1403) (Streptococcus lactis) protein is Ribonuclease 3.